The sequence spans 439 residues: Serine hydroxymethyltransferase (439 aa).

Residues Leu-119 and 123 to 125 (GHL) each bind (6S)-5,6,7,8-tetrahydrofolate. Residue Lys-228 is modified to N6-(pyridoxal phosphate)lysine. Position 370 to 372 (370 to 372 (SPF)) interacts with (6S)-5,6,7,8-tetrahydrofolate.

It belongs to the SHMT family. As to quaternary structure, homodimer. Pyridoxal 5'-phosphate is required as a cofactor.

It localises to the cytoplasm. The catalysed reaction is (6R)-5,10-methylene-5,6,7,8-tetrahydrofolate + glycine + H2O = (6S)-5,6,7,8-tetrahydrofolate + L-serine. It functions in the pathway one-carbon metabolism; tetrahydrofolate interconversion. The protein operates within amino-acid biosynthesis; glycine biosynthesis; glycine from L-serine: step 1/1. Catalyzes the reversible interconversion of serine and glycine with tetrahydrofolate (THF) serving as the one-carbon carrier. This reaction serves as the major source of one-carbon groups required for the biosynthesis of purines, thymidylate, methionine, and other important biomolecules. Also exhibits THF-independent aldolase activity toward beta-hydroxyamino acids, producing glycine and aldehydes, via a retro-aldol mechanism. The sequence is that of Serine hydroxymethyltransferase from Chlorobium phaeobacteroides (strain BS1).